Here is a 70-residue protein sequence, read N- to C-terminus: DNA gyrase inhibitor YacG (70 aa).

Zn(2+) is bound by residues Cys-9, Cys-12, Cys-28, and Cys-32. Residues 43-70 are disordered; it reads ESRKIPGSSIDPESIVTSNNKQDNVDEQ.

This sequence belongs to the DNA gyrase inhibitor YacG family. In terms of assembly, interacts with GyrB. Zn(2+) serves as cofactor.

Inhibits all the catalytic activities of DNA gyrase by preventing its interaction with DNA. Acts by binding directly to the C-terminal domain of GyrB, which probably disrupts DNA binding by the gyrase. In Legionella pneumophila (strain Lens), this protein is DNA gyrase inhibitor YacG.